Here is a 327-residue protein sequence, read N- to C-terminus: Gamma-resorcylate decarboxylase (327 aa).

Residues Glu-8, His-10, His-164, and Asp-287 each contribute to the Zn(2+) site. Residue Asp-287 is part of the active site.

The protein belongs to the metallo-dependent hydrolases superfamily. ACMSD family. As to quaternary structure, homotetramer. Zn(2+) is required as a cofactor.

It carries out the reaction 2,6-dihydroxybenzoate + H(+) = resorcinol + CO2. The enzyme catalyses 2,3-dihydroxybenzoate + H(+) = catechol + CO2. It participates in aromatic compound metabolism. With respect to regulation, insensitive to oxygen. Decarboxylation and carboxylation are inhibited by AgNO(3) and by diethyl pyrocarbonate, a histidine residue-specific inhibitor. Decarboxylation is also inhibited by HgCl(2) and activated by MgCl(2). Involved in the gamma-resorcylate (2,6-dihydroxybenzoate) catabolism. Catalyzes the reversible decarboxylation of gamma-resorcylate to resorcinol. Also catalyzes the decarboxylation of 2,3-dihydroxybenzoate to catechol, but does not act on 2-hydroxybenzoic acid 3-hydroxybenzoic acid, 4-hydroxybenzoic acid, 3,4-dihydroxybenzoic acid, 2,5-dihydroxybenzoic acid, 2,3,4-trihydroxybenzoic acid, 3,4,5-trihydroxybenzoic acid, 4-aminobenzoic acid, o-hydroxyphenylacetic acid and vanillic acid. Resorcinol and catechol can both be carboxylated by the reverse reaction. This Rhizobium radiobacter (Agrobacterium tumefaciens) protein is Gamma-resorcylate decarboxylase.